The following is a 100-amino-acid chain: MAKKSLIHREKKRQKLEQKYHLIRRSSKKEISKVPSLSEKWKIHGKLQSSPRNSAPTRLHRRCFSTGRPRANYRDFGLSGHILREMVHACLLPGATRSSW.

The protein belongs to the universal ribosomal protein uS14 family. Part of the 30S ribosomal subunit.

The protein localises to the plastid. Its subcellular location is the chloroplast. Functionally, binds 16S rRNA, required for the assembly of 30S particles. The polypeptide is Small ribosomal subunit protein uS14c (Gossypium barbadense (Sea Island cotton)).